Reading from the N-terminus, the 395-residue chain is Elongation factor Tu (395 aa).

Residues 10 to 204 form the tr-type G domain; that stretch reads KPHVNIGTIG…AVDEYIPTPQ (195 aa). The segment at 19–26 is G1; the sequence is GHVDHGKT. 19-26 serves as a coordination point for GTP; that stretch reads GHVDHGKT. Thr-26 is a binding site for Mg(2+). The interval 60-64 is G2; the sequence is GITIS. Residues 81–84 form a G3 region; sequence DCPG. GTP contacts are provided by residues 81-85 and 136-139; these read DCPGH and NKCD. Residues 136–139 form a G4 region; sequence NKCD. The segment at 174-176 is G5; it reads SAL.

This sequence belongs to the TRAFAC class translation factor GTPase superfamily. Classic translation factor GTPase family. EF-Tu/EF-1A subfamily. As to quaternary structure, monomer.

It localises to the cytoplasm. It carries out the reaction GTP + H2O = GDP + phosphate + H(+). Its function is as follows. GTP hydrolase that promotes the GTP-dependent binding of aminoacyl-tRNA to the A-site of ribosomes during protein biosynthesis. This Geobacillus sp. (strain WCH70) protein is Elongation factor Tu.